The primary structure comprises 94 residues: Integration host factor subunit beta (94 aa).

Belongs to the bacterial histone-like protein family. In terms of assembly, heterodimer of an alpha and a beta chain.

This protein is one of the two subunits of integration host factor, a specific DNA-binding protein that functions in genetic recombination as well as in transcriptional and translational control. The polypeptide is Integration host factor subunit beta (Vibrio atlanticus (strain LGP32) (Vibrio splendidus (strain Mel32))).